The following is a 258-amino-acid chain: Putative [LysW]-aminoadipate/[LysW]-glutamate kinase (258 aa).

Substrate-binding positions include 33-34, R60, and N164; that span reads GG.

It belongs to the acetylglutamate kinase family. LysZ subfamily.

It localises to the cytoplasm. It carries out the reaction [amino-group carrier protein]-C-terminal-N-(1,4-dicarboxybutan-1-yl)-L-glutamine + ATP = [amino-group carrier protein]-C-terminal-N-(1-carboxy-5-phosphooxy-5-oxopentan-1-yl)-L-glutamine + ADP. The catalysed reaction is [amino-group carrier protein]-C-terminal-gamma-(L-glutamyl)-L-glutamate + ATP = [amino-group carrier protein]-C-terminal-gamma-(5-phospho-L-glutamyl)-L-glutamate + ADP. The protein operates within amino-acid biosynthesis; L-lysine biosynthesis via AAA pathway; L-lysine from L-alpha-aminoadipate (Thermus route): step 2/5. It participates in amino-acid biosynthesis; L-arginine biosynthesis. Its function is as follows. Involved in both the arginine and lysine biosynthetic pathways. Phosphorylates the LysW-bound precursors glutamate (for arginine biosynthesis), respectively alpha-aminoadipate (for lysine biosynthesis). The chain is Putative [LysW]-aminoadipate/[LysW]-glutamate kinase from Caldivirga maquilingensis (strain ATCC 700844 / DSM 13496 / JCM 10307 / IC-167).